The chain runs to 514 residues: 2-isopropylmalate synthase (514 aa).

One can recognise a Pyruvate carboxyltransferase domain in the interval 5-268 (LIIFDTTLRD…DVGLDTTQIV (264 aa)). 4 residues coordinate Mn(2+): Asp14, His202, His204, and Asn239. The regulatory domain stretch occupies residues 395–514 (KFVSLSQRSE…KDDKLNPQRS (120 aa)).

The protein belongs to the alpha-IPM synthase/homocitrate synthase family. LeuA type 1 subfamily. As to quaternary structure, homodimer. The cofactor is Mn(2+).

It is found in the cytoplasm. The enzyme catalyses 3-methyl-2-oxobutanoate + acetyl-CoA + H2O = (2S)-2-isopropylmalate + CoA + H(+). It participates in amino-acid biosynthesis; L-leucine biosynthesis; L-leucine from 3-methyl-2-oxobutanoate: step 1/4. Its function is as follows. Catalyzes the condensation of the acetyl group of acetyl-CoA with 3-methyl-2-oxobutanoate (2-ketoisovalerate) to form 3-carboxy-3-hydroxy-4-methylpentanoate (2-isopropylmalate). In Burkholderia ambifaria (strain MC40-6), this protein is 2-isopropylmalate synthase.